The sequence spans 533 residues: Putative adhesin P1-like protein MPN_409 (533 aa).

Disordered stretches follow at residues Lys15–Ser45 and Ser92–Pro166. Residues Thr28 to Ser45 show a composition bias toward low complexity. The span at Arg95–Thr107 shows a compositional bias: basic and acidic residues.

Belongs to the adhesin P1 family.

In Mycoplasma pneumoniae (strain ATCC 29342 / M129 / Subtype 1) (Mycoplasmoides pneumoniae), this protein is Putative adhesin P1-like protein MPN_409.